Consider the following 278-residue polypeptide: Ribosomal RNA small subunit methyltransferase A (278 aa).

S-adenosyl-L-methionine contacts are provided by asparagine 27, leucine 29, glycine 54, glutamate 75, aspartate 101, and asparagine 120.

It belongs to the class I-like SAM-binding methyltransferase superfamily. rRNA adenine N(6)-methyltransferase family. RsmA subfamily.

It is found in the cytoplasm. It catalyses the reaction adenosine(1518)/adenosine(1519) in 16S rRNA + 4 S-adenosyl-L-methionine = N(6)-dimethyladenosine(1518)/N(6)-dimethyladenosine(1519) in 16S rRNA + 4 S-adenosyl-L-homocysteine + 4 H(+). Specifically dimethylates two adjacent adenosines (A1518 and A1519) in the loop of a conserved hairpin near the 3'-end of 16S rRNA in the 30S particle. May play a critical role in biogenesis of 30S subunits. The sequence is that of Ribosomal RNA small subunit methyltransferase A from Zymomonas mobilis subsp. mobilis (strain ATCC 31821 / ZM4 / CP4).